Reading from the N-terminus, the 442-residue chain is Probable folate-biopterin transporter 7 (442 aa).

The next 12 membrane-spanning stretches (helical) occupy residues 23 to 43 (LGFG…ANFF), 64 to 82 (LPMV…VYFF), 87 to 107 (IPYI…IAFL), 114 to 134 (ILAL…VEVA), 158 to 178 (FVWM…GIAI), 184 to 204 (QSTF…TINI), 241 to 261 (IAWI…MFFY), 270 to 290 (ASLL…WGFA), 302 to 322 (KLLT…LLFV), 335 to 355 (VYVL…ILPF), 379 to 399 (IALA…FVGV), and 410 to 430 (GLAI…WIYD).

It belongs to the major facilitator superfamily. Folate-biopterin transporter (TC 2.A.71) family.

It is found in the membrane. Its function is as follows. Could mediate folate transport. This Arabidopsis thaliana (Mouse-ear cress) protein is Probable folate-biopterin transporter 7.